The chain runs to 89 residues: Small ribosomal subunit protein uS17 (89 aa).

Belongs to the universal ribosomal protein uS17 family. As to quaternary structure, part of the 30S ribosomal subunit.

In terms of biological role, one of the primary rRNA binding proteins, it binds specifically to the 5'-end of 16S ribosomal RNA. This Xanthomonas campestris pv. campestris (strain 8004) protein is Small ribosomal subunit protein uS17.